A 448-amino-acid chain; its full sequence is MWVAERVVGERRMREIQRFARNAKLTVVCLLLTVVVLRGTVGAGKFGTPQQDLIELRHRFISHPHRALAEHHDALSRGGGSSSSSGRAAQRDDEPDPPPRTLRDPPYTLGPKISDWDEQRAAWHRRHPETPPFVNDVKPRVLLVTGSSPKPCENPVGDHYLLKSIKNKMDYCRVHGLEIFYNMALLDAEMAGFWAKLPLLRALLLAHPEIEFLWWMDSDAMFSDMAFELPWERYGPYNLIMHGWDEMVYDDKNWIGLNTGSFLLRNCQWSLDFLDTWAPMGPKGPVRIEAGKVLTKYLKDRPVFEADDQSAMVYILATEREKWGDKVYLENGYYLHGYWGILVDRYEEMLENYHPGLGDHRWPLVTHFVGCKPCGKFGDYPVERCLKQMERAFNFGDNQILQMYGFTHKSLGSRKVKRIRNETSNPLDVKDELGLLHPAFKAMKTTST.

The Cytoplasmic segment spans residues 1–19 (MWVAERVVGERRMREIQRF). Residues 20–42 (ARNAKLTVVCLLLTVVVLRGTVG) form a helical; Signal-anchor for type II membrane protein membrane-spanning segment. The Lumenal portion of the chain corresponds to 43 to 448 (AGKFGTPQQD…AFKAMKTTST (406 aa)). Positions 71–113 (HHDALSRGGGSSSSSGRAAQRDDEPDPPPRTLRDPPYTLGPKI) are disordered. An N-linked (GlcNAc...) asparagine glycan is attached at N421.

This sequence belongs to the glycosyltransferase 34 family.

It localises to the golgi apparatus membrane. It catalyses the reaction Transfers an alpha-D-xylosyl residue from UDP-D-xylose to a glucose residue in xyloglucan, forming an alpha-(1-&gt;6)-D-xylosyl-D-glucose linkage.. Functionally, probable xyloglucan xylosyltransferase involved in the biosynthesis of xyloglucan in roots. The chain is Probable xyloglucan 6-xylosyltransferase 1 from Oryza sativa subsp. indica (Rice).